Consider the following 71-residue polypeptide: General transcription factor IIH subunit 5 (71 aa).

Residue T69 is modified to Phosphothreonine.

It belongs to the TFB5 family. In terms of assembly, component of the 7-subunit TFIIH core complex composed of XPB/ERCC3, XPD/ERCC2, GTF2H1, GTF2H2, GTF2H3, GTF2H4 and GTF2H5, which is active in NER. The core complex associates with the 3-subunit CDK-activating kinase (CAK) module composed of CCNH/cyclin H, CDK7 and MNAT1 to form the 10-subunit holoenzyme (holo-TFIIH) active in transcription. Part of TBP-based Pol II pre-initiation complex (PIC), in which Pol II core assembles with general transcription factors and other specific initiation factors including GTF2E1, GTF2E2, GTF2F1, GTF2F2, TCEA1, ERCC2, ERCC3, GTF2H2, GTF2H3, GTF2H4, GTF2H5, GTF2A1, GTF2A2, GTF2B and TBP; this large multi-subunit PIC complex mediates DNA unwinding and targets Pol II core to the transcription start site where the first phosphodiester bond forms.

The protein resides in the nucleus. It is found in the cytoplasm. Component of the general transcription and DNA repair factor IIH (TFIIH) core complex, which is involved in general and transcription-coupled nucleotide excision repair (NER) of damaged DNA and, when complexed to CAK, in RNA transcription by RNA polymerase II. In NER, TFIIH acts by opening DNA around the lesion to allow the excision of the damaged oligonucleotide and its replacement by a new DNA fragment. In transcription, TFIIH has an essential role in transcription initiation. When the pre-initiation complex (PIC) has been established, TFIIH is required for promoter opening and promoter escape. Phosphorylation of the C-terminal tail (CTD) of the largest subunit of RNA polymerase II by the kinase module CAK controls the initiation of transcription. Necessary for the stability of the TFIIH complex and for the presence of normal levels of TFIIH in the cell. The polypeptide is General transcription factor IIH subunit 5 (Mus musculus (Mouse)).